The primary structure comprises 647 residues: Bifunctional enzyme CysN/CysC (647 aa).

The tract at residues 1–472 (MSHQSDLIAT…TEERAARFGQ (472 aa)) is sulfate adenylyltransferase. The region spanning 22-239 (KQLLRFITCG…LETVYIGSDR (218 aa)) is the tr-type G domain. Residues 31–38 (GSVDDGKS) form a G1 region. 31–38 (GSVDDGKS) contacts GTP. Positions 89–93 (GITID) are G2. The tract at residues 110 to 113 (DTPG) is G3. GTP is bound by residues 110 to 114 (DTPGH) and 165 to 168 (NKMD). Residues 165 to 168 (NKMD) form a G4 region. Residues 204–206 (SAL) are G5. Residues 473 to 614 (KPATVLLTGL…FPGVTAKYDV (142 aa)) are adenylyl-sulfate kinase. 481–488 (GLTGSGKT) contacts ATP.

In the C-terminal section; belongs to the APS kinase family. It in the N-terminal section; belongs to the TRAFAC class translation factor GTPase superfamily. Classic translation factor GTPase family. CysN/NodQ subfamily. Heterodimer composed of CysD, the smaller subunit, and CysNC.

It catalyses the reaction sulfate + ATP + H(+) = adenosine 5'-phosphosulfate + diphosphate. The enzyme catalyses adenosine 5'-phosphosulfate + ATP = 3'-phosphoadenylyl sulfate + ADP + H(+). The protein operates within sulfur metabolism; hydrogen sulfide biosynthesis; sulfite from sulfate: step 1/3. It functions in the pathway sulfur metabolism; hydrogen sulfide biosynthesis; sulfite from sulfate: step 2/3. In terms of biological role, with CysD forms the ATP sulfurylase (ATPS) that catalyzes the adenylation of sulfate producing adenosine 5'-phosphosulfate (APS) and diphosphate, the first enzymatic step in sulfur assimilation pathway. APS synthesis involves the formation of a high-energy phosphoric-sulfuric acid anhydride bond driven by GTP hydrolysis by CysN coupled to ATP hydrolysis by CysD. Functionally, APS kinase catalyzes the synthesis of activated sulfate. This is Bifunctional enzyme CysN/CysC (cysNC) from Rhodopirellula baltica (strain DSM 10527 / NCIMB 13988 / SH1).